The sequence spans 73 residues: UPF0154 protein LGAS_0795 (73 aa).

The chain crosses the membrane as a helical span at residues 3–23 (LGLAIFLIIIALLIGLVGGFY).

The protein belongs to the UPF0154 family.

The protein resides in the cell membrane. The polypeptide is UPF0154 protein LGAS_0795 (Lactobacillus gasseri (strain ATCC 33323 / DSM 20243 / BCRC 14619 / CIP 102991 / JCM 1131 / KCTC 3163 / NCIMB 11718 / NCTC 13722 / AM63)).